The following is a 187-amino-acid chain: Adenylate kinase 1 (187 aa).

14–19 (GSGKGT) contributes to the ATP binding site. The NMP stretch occupies residues 34–63 (STGDMLRQAIADGTELGNQAKGYMDKGELV). Residues T35, R40, 61 to 63 (ELV), 89 to 92 (GFPR), and Q96 contribute to the AMP site. Positions 130 to 136 (ARGRADD) are LID. Residue R131 coordinates ATP. R133 and R144 together coordinate AMP. Q172 contacts ATP.

This sequence belongs to the adenylate kinase family. In terms of assembly, monomer.

It is found in the cytoplasm. The catalysed reaction is AMP + ATP = 2 ADP. The protein operates within purine metabolism; AMP biosynthesis via salvage pathway; AMP from ADP: step 1/1. Catalyzes the reversible transfer of the terminal phosphate group between ATP and AMP. Plays an important role in cellular energy homeostasis and in adenine nucleotide metabolism. The chain is Adenylate kinase 1 from Synechocystis sp. (strain ATCC 27184 / PCC 6803 / Kazusa).